The primary structure comprises 154 residues: Transcriptional repressor NrdR (154 aa).

A zinc finger spans residues 3 to 34 (CPFCGANDTKVIDSRLVAEGEQVRRRRECLAC). In terms of domain architecture, ATP-cone spans 49–139 (PRLIKQDGSR…VYRRFQDLNE (91 aa)).

Belongs to the NrdR family. The cofactor is Zn(2+).

In terms of biological role, negatively regulates transcription of bacterial ribonucleotide reductase nrd genes and operons by binding to NrdR-boxes. This chain is Transcriptional repressor NrdR, found in Pseudomonas syringae pv. syringae (strain B728a).